Here is a 158-residue protein sequence, read N- to C-terminus: UPF0303 protein SCO2848 (158 aa).

It belongs to the UPF0303 family.

The protein is UPF0303 protein SCO2848 of Streptomyces coelicolor (strain ATCC BAA-471 / A3(2) / M145).